A 114-amino-acid chain; its full sequence is Holo-[acyl-carrier-protein] synthase (114 aa).

Residues D8 and E58 each contribute to the Mg(2+) site.

This sequence belongs to the P-Pant transferase superfamily. AcpS family. Mg(2+) is required as a cofactor.

It is found in the cytoplasm. It catalyses the reaction apo-[ACP] + CoA = holo-[ACP] + adenosine 3',5'-bisphosphate + H(+). Transfers the 4'-phosphopantetheine moiety from coenzyme A to a Ser of acyl-carrier-protein. The sequence is that of Holo-[acyl-carrier-protein] synthase from Mycoplasma genitalium (strain ATCC 33530 / DSM 19775 / NCTC 10195 / G37) (Mycoplasmoides genitalium).